We begin with the raw amino-acid sequence, 32 residues long: Conotoxin Cltx-4 (32 aa).

Residues P2, P24, P28, and P30 each carry the 4-hydroxyproline modification. A Serine amide modification is found at S32.

In terms of processing, contains 4 disulfide bonds. Expressed by the venom duct.

The protein localises to the secreted. The sequence is that of Conotoxin Cltx-4 from Californiconus californicus (California cone).